The primary structure comprises 270 residues: Putative phosphoenolpyruvate synthase regulatory protein (270 aa).

150 to 157 (GVSRSGKT) provides a ligand contact to ADP.

It belongs to the pyruvate, phosphate/water dikinase regulatory protein family. PSRP subfamily.

The enzyme catalyses [pyruvate, water dikinase] + ADP = [pyruvate, water dikinase]-phosphate + AMP + H(+). It carries out the reaction [pyruvate, water dikinase]-phosphate + phosphate + H(+) = [pyruvate, water dikinase] + diphosphate. Its function is as follows. Bifunctional serine/threonine kinase and phosphorylase involved in the regulation of the phosphoenolpyruvate synthase (PEPS) by catalyzing its phosphorylation/dephosphorylation. The chain is Putative phosphoenolpyruvate synthase regulatory protein from Cupriavidus metallidurans (strain ATCC 43123 / DSM 2839 / NBRC 102507 / CH34) (Ralstonia metallidurans).